The chain runs to 265 residues: 5'-nucleotidase SurE (265 aa).

Asp8, Asp9, Ser39, and Asn96 together coordinate a divalent metal cation.

Belongs to the SurE nucleotidase family. It depends on a divalent metal cation as a cofactor.

It localises to the cytoplasm. The catalysed reaction is a ribonucleoside 5'-phosphate + H2O = a ribonucleoside + phosphate. In terms of biological role, nucleotidase that shows phosphatase activity on nucleoside 5'-monophosphates. The protein is 5'-nucleotidase SurE of Dehalococcoides mccartyi (strain ATCC BAA-2266 / KCTC 15142 / 195) (Dehalococcoides ethenogenes (strain 195)).